The following is a 423-amino-acid chain: Galactosylceramide sulfotransferase (423 aa).

Topologically, residues Met-1–Lys-14 are cytoplasmic. A helical; Signal-anchor for type II membrane protein transmembrane segment spans residues Gly-15–Pro-35. Residues Pro-36 to Trp-423 are Lumenal-facing. The tract at residues Gly-48–Gly-70 is disordered. 3 N-linked (GlcNAc...) asparagine glycosylation sites follow: Asn-66, Asn-156, and Asn-312.

It belongs to the galactose-3-O-sulfotransferase family.

The protein localises to the golgi apparatus membrane. The catalysed reaction is a beta-D-galactosyl-(1&lt;-&gt;1')-N-acylsphing-4-enine + 3'-phosphoadenylyl sulfate = an N-acyl-1-beta-D-(3-O-sulfo)-galactosyl-sphing-4-enine + adenosine 3',5'-bisphosphate + H(+). The enzyme catalyses a 1-O-alkyl-2-acyl-3-O-(beta-D-galactosyl)-sn-glycerol + 3'-phosphoadenylyl sulfate = a 1-O-alkyl-2-acyl-3-(beta-D-3-sulfogalactosyl)-sn-glycerol + adenosine 3',5'-bisphosphate + H(+). It carries out the reaction a beta-D-Gal-(1&lt;-&gt;1')-ceramide + 3'-phosphoadenylyl sulfate = 1-(3-O-sulfo-beta-D-galactosyl)-ceramide + adenosine 3',5'-bisphosphate + H(+). It catalyses the reaction a 1,2-diacyl-3-O-(beta-D-galactosyl)-sn-glycerol + 3'-phosphoadenylyl sulfate = 1,2-diacyl-3-(3-O-sulfo-beta-D-galactosyl)-sn-glycerol + adenosine 3',5'-bisphosphate + H(+). The catalysed reaction is a beta-D-Gal-(1-&gt;4)-beta-D-Glc-(1&lt;-&gt;1)-Cer(d18:1(4E)) + 3'-phosphoadenylyl sulfate = beta-D-3-sulfogalactosyl-(1-&gt;4)-beta-D-glucosyl-(1&lt;-&gt;1')-N-acylsphing-4-enine + adenosine 3',5'-bisphosphate + H(+). The protein operates within lipid metabolism; sphingolipid metabolism. Its function is as follows. Catalyzes the transfer of a sulfate group to position 3 of non-reducing beta-galactosyl residues in glycerolipids and sphingolipids, therefore participates in the biosynthesis of sulfoglycolipids. Catalyzes the synthesis of galactosylceramide sulfate (sulfatide), a major lipid component of the myelin sheath and of monogalactosylalkylacylglycerol sulfate (seminolipid), present in spermatocytes. Seems to prefer beta-glycosides at the non-reducing termini of sugar chains attached to a lipid moiety. Also acts on lactosylceramide, galactosyl 1-alkyl-2-sn-glycerol and galactosyl diacylglycerol (in vitro). This is Galactosylceramide sulfotransferase from Bos taurus (Bovine).